Consider the following 202-residue polypeptide: Small ribosomal subunit protein uS4c (202 aa).

Positions 90-153 (MRLDNIIFRL…KSQAIISKNL (64 aa)) constitute an S4 RNA-binding domain.

The protein belongs to the universal ribosomal protein uS4 family. As to quaternary structure, part of the 30S ribosomal subunit. Contacts protein S5. The interaction surface between S4 and S5 is involved in control of translational fidelity.

It is found in the plastid. The protein localises to the chloroplast. In terms of biological role, one of the primary rRNA binding proteins, it binds directly to 16S rRNA where it nucleates assembly of the body of the 30S subunit. Its function is as follows. With S5 and S12 plays an important role in translational accuracy. The sequence is that of Small ribosomal subunit protein uS4c (rps4) from Rosulabryum capillare (Capillary thread-moss).